The chain runs to 601 residues: Serine/threonine-protein phosphatase 2A 65 kDa regulatory subunit A beta isoform (601 aa).

At Ala-2 the chain carries N-acetylalanine. 15 HEAT repeats span residues 20–58 (DSLY…GVER), 59–96 (TRTE…GGPD), 97–135 (FAHC…TPVA), 136–173 (LEAH…ASNA), 174–212 (VKAE…ELDS), 213–251 (VKTE…SQED), 252–290 (LEAL…GPKI), 291–333 (ALSD…RETV), 334–372 (IMNQ…GKEN), 373–411 (TIEH…GIRQ), 412–450 (LSQS…GVEF), 451–489 (FDEK…GTEW), 490–528 (AQNT…GKEI), 529–567 (TTKQ…DTNA), and 568–601 (LQGE…LALA).

The protein belongs to the phosphatase 2A regulatory subunit A family. In terms of assembly, PP2A consists of a common heterodimeric core enzyme, composed of a 36 kDa catalytic subunit (subunit C) and a 65 kDa constant regulatory subunit (PR65 or subunit A), that associates with a variety of regulatory subunits. Proteins that associate with the core dimer include three families of regulatory subunits B (the R2/B/PR55/B55, R3/B''/PR72/PR130/PR59 and R5/B'/B56 families), the 48 kDa variable regulatory subunit, viral proteins, and cell signaling molecules. Interacts with IPO9. Interacts with SGO1. Interacts with RAF1.

The PR65 subunit of protein phosphatase 2A serves as a scaffolding molecule to coordinate the assembly of the catalytic subunit and a variable regulatory B subunit. The chain is Serine/threonine-protein phosphatase 2A 65 kDa regulatory subunit A beta isoform (Ppp2r1b) from Mus musculus (Mouse).